A 220-amino-acid chain; its full sequence is Large ribosomal subunit protein uL16 (220 aa).

This sequence belongs to the universal ribosomal protein uL16 family. In terms of assembly, component of the large ribosomal subunit. Mature ribosomes consist of a small (40S) and a large (60S) subunit. The 40S subunit contains about 32 different proteins and 1 molecule of RNA (18S). The 60S subunit contains 45 different proteins and 3 molecules of RNA (25S, 5.8S and 5S).

Its subcellular location is the cytoplasm. Component of the ribosome, a large ribonucleoprotein complex responsible for the synthesis of proteins in the cell. The small ribosomal subunit (SSU) binds messenger RNAs (mRNAs) and translates the encoded message by selecting cognate aminoacyl-transfer RNA (tRNA) molecules. The large subunit (LSU) contains the ribosomal catalytic site termed the peptidyl transferase center (PTC), which catalyzes the formation of peptide bonds, thereby polymerizing the amino acids delivered by tRNAs into a polypeptide chain. The nascent polypeptides leave the ribosome through a tunnel in the LSU and interact with protein factors that function in enzymatic processing, targeting, and the membrane insertion of nascent chains at the exit of the ribosomal tunnel. This is Large ribosomal subunit protein uL16 from Candida albicans (strain SC5314 / ATCC MYA-2876) (Yeast).